A 323-amino-acid chain; its full sequence is Delta(7)-sterol 5(6)-desaturase ERG3B (323 aa).

A run of 3 helical transmembrane segments spans residues 67–87 (ASIL…SAAL), 112–132 (IQSS…FFLG), and 150–170 (SWLA…IYWI). The 129-residue stretch at 157–285 (ILYMVFNDLG…YFTWADNYWG (129 aa)) folds into the Fatty acid hydroxylase domain. A Histidine box-1 motif is present at residues 171–175 (HRLEH). Positions 184 to 188 (HKPHH) match the Histidine box-2 motif. A Histidine box-3 motif is present at residues 262 to 266 (HTLHH).

The protein belongs to the sterol desaturase family.

It localises to the endoplasmic reticulum membrane. It catalyses the reaction episterol + 2 Fe(II)-[cytochrome b5] + O2 + 2 H(+) = 5-dehydroepisterol + 2 Fe(III)-[cytochrome b5] + 2 H2O. It functions in the pathway steroid metabolism; ergosterol biosynthesis. In terms of biological role, C-5 sterol desaturase; part of the third module of ergosterol biosynthesis pathway that includes the late steps of the pathway. ERG3A and ERG3BB catalyze the introduction of a C-5 double bond in the B ring to produce 5-dehydroepisterol. The third module or late pathway involves the ergosterol synthesis itself through consecutive reactions that mainly occur in the endoplasmic reticulum (ER) membrane. Firstly, the squalene synthase ERG9 catalyzes the condensation of 2 farnesyl pyrophosphate moieties to form squalene, which is the precursor of all steroids. Squalene synthase is crucial for balancing the incorporation of farnesyl diphosphate (FPP) into sterol and nonsterol isoprene synthesis. Secondly, squalene is converted into lanosterol by the consecutive action of the squalene epoxidase ERG1 and the lanosterol synthase ERG7. Then, the delta(24)-sterol C-methyltransferase ERG6 methylates lanosterol at C-24 to produce eburicol. Eburicol is the substrate of the sterol 14-alpha demethylase encoded by CYP51A, CYP51B and CYP51C, to yield 4,4,24-trimethyl ergosta-8,14,24(28)-trienol. CYP51B encodes the enzyme primarily responsible for sterol 14-alpha-demethylation, and plays an essential role in ascospore formation. CYP51A encodes an additional sterol 14-alpha-demethylase, induced on ergosterol depletion and responsible for the intrinsic variation in azole sensitivity. The third CYP51 isoform, CYP51C, does not encode a sterol 14-alpha-demethylase, but is required for full virulence on host wheat ears. The C-14 reductase ERG24 then reduces the C14=C15 double bond which leads to 4,4-dimethylfecosterol. A sequence of further demethylations at C-4, involving the C-4 demethylation complex containing the C-4 methylsterol oxidases ERG25, the sterol-4-alpha-carboxylate 3-dehydrogenase ERG26 and the 3-keto-steroid reductase ERG27, leads to the production of fecosterol via 4-methylfecosterol. ERG28 has a role as a scaffold to help anchor ERG25, ERG26 and ERG27 to the endoplasmic reticulum. The C-8 sterol isomerase ERG2 then catalyzes the reaction which results in unsaturation at C-7 in the B ring of sterols and thus converts fecosterol to episterol. The sterol-C5-desaturases ERG3A and ERG3BB then catalyze the introduction of a C-5 double bond in the B ring to produce 5-dehydroepisterol. The C-22 sterol desaturases ERG5A and ERG5B further convert 5-dehydroepisterol into ergosta-5,7,22,24(28)-tetraen-3beta-ol by forming the C-22(23) double bond in the sterol side chain. Finally, ergosta-5,7,22,24(28)-tetraen-3beta-ol is substrate of the C-24(28) sterol reductase ERG4 to produce ergosterol. This chain is Delta(7)-sterol 5(6)-desaturase ERG3B, found in Gibberella zeae (strain ATCC MYA-4620 / CBS 123657 / FGSC 9075 / NRRL 31084 / PH-1) (Wheat head blight fungus).